Here is a 321-residue protein sequence, read N- to C-terminus: Glycerol-3-phosphate phosphatase (321 aa).

Residue Asp-34 is the Nucleophile of the active site. Mg(2+) is bound by residues Asp-34, Asp-36, and Asp-260. The active-site Proton donor is the Asp-36.

It belongs to the HAD-like hydrolase superfamily. CbbY/CbbZ/Gph/YieH family. As to quaternary structure, homodimer. It depends on Mg(2+) as a cofactor. As to expression, ubiquitously expressed with higher expression in testis, heart, skeletal muscle and islet tissue (at protein level).

The catalysed reaction is O-phospho-L-tyrosyl-[protein] + H2O = L-tyrosyl-[protein] + phosphate. The enzyme catalyses sn-glycerol 1-phosphate + H2O = glycerol + phosphate. It carries out the reaction sn-glycerol 3-phosphate + H2O = glycerol + phosphate. Inhibited by orthovanadate, beryllium trifluoride, Ca(2+) and EDTA. Functionally, glycerol-3-phosphate phosphatase hydrolyzing glycerol-3-phosphate into glycerol. Thereby, regulates the cellular levels of glycerol-3-phosphate a metabolic intermediate of glucose, lipid and energy metabolism. Was also shown to have a 2-phosphoglycolate phosphatase activity and a tyrosine-protein phosphatase activity. However, their physiological relevance is unclear. In vitro, also has a phosphatase activity toward ADP, ATP, GDP and GTP. The protein is Glycerol-3-phosphate phosphatase of Mus musculus (Mouse).